The primary structure comprises 263 residues: Hydroxyethylthiazole kinase (263 aa).

Met-45 provides a ligand contact to substrate. The ATP site is built by Arg-121 and Ser-167. Gly-194 contacts substrate.

Belongs to the Thz kinase family. Mg(2+) serves as cofactor.

The enzyme catalyses 5-(2-hydroxyethyl)-4-methylthiazole + ATP = 4-methyl-5-(2-phosphooxyethyl)-thiazole + ADP + H(+). Its pathway is cofactor biosynthesis; thiamine diphosphate biosynthesis; 4-methyl-5-(2-phosphoethyl)-thiazole from 5-(2-hydroxyethyl)-4-methylthiazole: step 1/1. Functionally, catalyzes the phosphorylation of the hydroxyl group of 4-methyl-5-beta-hydroxyethylthiazole (THZ). The protein is Hydroxyethylthiazole kinase of Vibrio campbellii (strain ATCC BAA-1116).